The following is a 174-amino-acid chain: U1 small nuclear ribonucleoprotein C (174 aa).

The Matrin-type zinc-finger motif lies at 4 to 36 (YYCDYCDKYLTHDSPSVRKSHTVGKQHKLAVQL). Low complexity-rich tracts occupy residues 82–109 (QQQQ…QQGM) and 122–140 (PHQF…FQPP). Positions 82-174 (QQQQQQQQQQ…QHNQPTIPGL (93 aa)) are disordered. Residues 141–163 (HHQHHPHQQHQQHQQHQHQHQHQ) are compositionally biased toward basic residues. Low complexity predominate over residues 164–174 (QQHNQPTIPGL).

This sequence belongs to the U1 small nuclear ribonucleoprotein C family. Component of the U1 snRNP. The U1 snRNP is composed of the U1 snRNA and the 7 core Sm proteins SNRPB, SNRPD1, SNRPD2, SNRPD3, SNRPE, SNRPF and SNRPG that assemble in a heptameric protein ring on the Sm site of the small nuclear RNA to form the core snRNP, and at least 3 U1 snRNP-specific proteins SNRNP70/U1-70K, SNRPA/U1-A and SNRPC/U1-C. SNRPC/U1-C interacts with U1 snRNA and the 5' splice-site region of the pre-mRNA.

Its subcellular location is the nucleus. Functionally, component of the spliceosomal U1 snRNP, which is essential for recognition of the pre-mRNA 5' splice-site and the subsequent assembly of the spliceosome. SNRPC/U1-C is directly involved in initial 5' splice-site recognition for both constitutive and regulated alternative splicing. The interaction with the 5' splice-site seems to precede base-pairing between the pre-mRNA and the U1 snRNA. Stimulates commitment or early (E) complex formation by stabilizing the base pairing of the 5' end of the U1 snRNA and the 5' splice-site region. The polypeptide is U1 small nuclear ribonucleoprotein C (Dictyostelium discoideum (Social amoeba)).